The sequence spans 63 residues: Large ribosomal subunit protein bL35 (63 aa).

A disordered region spans residues 24–44 (RAKAYRSHRATGKTTKQKRQL).

It belongs to the bacterial ribosomal protein bL35 family.

The protein is Large ribosomal subunit protein bL35 of Mycoplasma mycoides subsp. mycoides SC (strain CCUG 32753 / NCTC 10114 / PG1).